A 603-amino-acid polypeptide reads, in one-letter code: Cdc42-interacting protein 4 (603 aa).

Residues 1 to 117 (MDWGTELWDQ…EMKQERKMHF (117 aa)) are required for podosome formation and interaction with AKAP9 and microtubules. Residues 1–117 (MDWGTELWDQ…EMKQERKMHF (117 aa)) form a required for translocation to the plasma membrane in response to insulin region. Residues 1–264 (MDWGTELWDQ…AAESVDAKND (264 aa)) enclose the F-BAR domain. The stretch at 67–259 (FSQQQSFVQL…EGMKVAAESV (193 aa)) forms a coiled coil. Positions 293–539 (RVPSDSSLGT…YTEFDEDFEE (247 aa)) are interaction with CDC42. Residues 293–603 (RVPSDSSLGT…PTSYLRVTLN (311 aa)) form an interaction with PDE6G region. The tract at residues 295 to 358 (PSDSSLGTPD…PSSPRSGRDP (64 aa)) is disordered. A phosphoserine mark is found at serine 296, serine 298, and serine 299. Over residues 316–329 (SRAKRWPFGKKNKP) the composition is skewed to basic residues. Residues 333 to 346 (SLSLLGGHLPSTLS) are compositionally biased toward low complexity. Residues serine 335 and serine 351 each carry the phosphoserine modification. Residues 388–481 (TEDFSHLPPE…ESRVLSNRGD (94 aa)) are a coiled coil. Residues 393 to 470 (HLPPEQQRKR…VQKYEAWLAE (78 aa)) enclose the REM-1 domain. The tract at residues 471–603 (AESRVLSNRG…PTSYLRVTLN (133 aa)) is required for interaction with FASLG and localization to lysosomes. The segment at 477–541 (SNRGDSLSRH…EFDEDFEEPA (65 aa)) is disordered. Position 482 is a phosphoserine (serine 482). Residues 487–543 (ARPPDPPTTAPPDSSSSSTNSGSQDNKESSSEEPPSEGQDTPIYTEFDEDFEEPASP) are interaction with DNM2 and WASL. Residues 497-510 (PPDSSSSSTNSGSQ) are compositionally biased toward low complexity. The segment at 532 to 603 (EFDEDFEEPA…PTSYLRVTLN (72 aa)) is interaction with DNM1 and WASL. Positions 540–603 (PASPIGQCVA…PTSYLRVTLN (64 aa)) are required for podosome formation. The SH3 domain occupies 542–603 (SPIGQCVAIY…PTSYLRVTLN (62 aa)). Residues 546–603 (QCVAIYHFEGSSEGTVSMSEGEDLSLMEEDKGDGWTRVRRKQGAEGYVPTSYLRVTLN) are interaction with WAS. The tract at residues 548 to 603 (VAIYHFEGSSEGTVSMSEGEDLSLMEEDKGDGWTRVRRKQGAEGYVPTSYLRVTLN) is interaction with ARHGAP17, DAAM1, DIAPH1 and DIAPH2.

The protein belongs to the FNBP1 family. In terms of assembly, homodimerizes, the dimers can polymerize end-to-end to form filamentous structures. Interacts with AKAP9, ARHGAP17, DAAM1, DIAPH1, DIAPH2, DNM1, FASLG/FASL, GAPVD1, LYN, microtubules, PDE6G, SRC and WAS/WASP. Interacts with the ligand binding domain of the thyroid receptor (TR) in the presence of thyroid hormone. May interact with CTNNB1 and HD/HTT. Interacts specifically with GTP-bound CDC42 and RHOQ. Interacts with DNM2 and WASL. In terms of processing, tyrosine phosphorylated. Also phosphorylated by PKA.

Its subcellular location is the cytoplasm. It is found in the cytoskeleton. The protein resides in the cell cortex. It localises to the lysosome. The protein localises to the golgi apparatus. Its subcellular location is the cell membrane. It is found in the cell projection. The protein resides in the phagocytic cup. Functionally, required to coordinate membrane tubulation with reorganization of the actin cytoskeleton during endocytosis. Binds to lipids such as phosphatidylinositol 4,5-bisphosphate and phosphatidylserine and promotes membrane invagination and the formation of tubules. Also promotes CDC42-induced actin polymerization by recruiting WASL/N-WASP which in turn activates the Arp2/3 complex. Actin polymerization may promote the fission of membrane tubules to form endocytic vesicles. Required for the formation of podosomes, actin-rich adhesion structures specific to monocyte-derived cells. May be required for the lysosomal retention of FASLG/FASL. Required for translocation of GLUT4 to the plasma membrane in response to insulin signaling. This is Cdc42-interacting protein 4 (Trip10) from Mus musculus (Mouse).